Consider the following 214-residue polypeptide: Phosphatidylserine decarboxylase proenzyme (214 aa).

The Schiff-base intermediate with substrate; via pyruvic acid role is filled by S182. At S182 the chain carries Pyruvic acid (Ser); by autocatalysis.

Belongs to the phosphatidylserine decarboxylase family. PSD-A subfamily. As to quaternary structure, heterodimer of a large membrane-associated beta subunit and a small pyruvoyl-containing alpha subunit. The cofactor is pyruvate. Is synthesized initially as an inactive proenzyme. Formation of the active enzyme involves a self-maturation process in which the active site pyruvoyl group is generated from an internal serine residue via an autocatalytic post-translational modification. Two non-identical subunits are generated from the proenzyme in this reaction, and the pyruvate is formed at the N-terminus of the alpha chain, which is derived from the carboxyl end of the proenzyme. The post-translation cleavage follows an unusual pathway, termed non-hydrolytic serinolysis, in which the side chain hydroxyl group of the serine supplies its oxygen atom to form the C-terminus of the beta chain, while the remainder of the serine residue undergoes an oxidative deamination to produce ammonia and the pyruvoyl prosthetic group on the alpha chain.

The protein resides in the cell membrane. The enzyme catalyses a 1,2-diacyl-sn-glycero-3-phospho-L-serine + H(+) = a 1,2-diacyl-sn-glycero-3-phosphoethanolamine + CO2. Its pathway is phospholipid metabolism; phosphatidylethanolamine biosynthesis; phosphatidylethanolamine from CDP-diacylglycerol: step 2/2. Catalyzes the formation of phosphatidylethanolamine (PtdEtn) from phosphatidylserine (PtdSer). The chain is Phosphatidylserine decarboxylase proenzyme from Burkholderia cenocepacia (strain ATCC BAA-245 / DSM 16553 / LMG 16656 / NCTC 13227 / J2315 / CF5610) (Burkholderia cepacia (strain J2315)).